A 197-amino-acid chain; its full sequence is Glycerol-3-phosphate acyltransferase (197 aa).

The next 4 membrane-spanning stretches (helical) occupy residues 5–25, 70–90, 111–131, and 153–173; these read LILI…VGKI, LPVL…AVIG, VMLF…FIVL, and IFFT…AFIF.

Belongs to the PlsY family. Probably interacts with PlsX.

It is found in the cell membrane. The enzyme catalyses an acyl phosphate + sn-glycerol 3-phosphate = a 1-acyl-sn-glycero-3-phosphate + phosphate. The protein operates within lipid metabolism; phospholipid metabolism. Catalyzes the transfer of an acyl group from acyl-phosphate (acyl-PO(4)) to glycerol-3-phosphate (G3P) to form lysophosphatidic acid (LPA). This enzyme utilizes acyl-phosphate as fatty acyl donor, but not acyl-CoA or acyl-ACP. The protein is Glycerol-3-phosphate acyltransferase of Geobacillus sp. (strain WCH70).